The primary structure comprises 244 residues: Ribonuclease PH (244 aa).

Phosphate contacts are provided by residues R86 and G124–R126.

The protein belongs to the RNase PH family. In terms of assembly, homohexameric ring arranged as a trimer of dimers.

It catalyses the reaction tRNA(n+1) + phosphate = tRNA(n) + a ribonucleoside 5'-diphosphate. Phosphorolytic 3'-5' exoribonuclease that plays an important role in tRNA 3'-end maturation. Removes nucleotide residues following the 3'-CCA terminus of tRNAs; can also add nucleotides to the ends of RNA molecules by using nucleoside diphosphates as substrates, but this may not be physiologically important. Probably plays a role in initiation of 16S rRNA degradation (leading to ribosome degradation) during starvation. The chain is Ribonuclease PH from Oceanobacillus iheyensis (strain DSM 14371 / CIP 107618 / JCM 11309 / KCTC 3954 / HTE831).